We begin with the raw amino-acid sequence, 440 residues long: Glucoside xylosyltransferase 1 (440 aa).

Topologically, residues 1-6 are cytoplasmic; it reads MRRYLR. Residues 7–29 traverse the membrane as a helical; Signal-anchor for type II membrane protein segment; the sequence is VVVLCVACGFCSLLYAFSQLAVS. Residues 30-440 are Lumenal-facing; that stretch reads LEEGTGGGGG…DRYARSPKEK (411 aa). N-linked (GlcNAc...) asparagine glycosylation is found at asparagine 173, asparagine 237, and asparagine 278.

Belongs to the glycosyltransferase 8 family.

The protein resides in the membrane. It catalyses the reaction 3-O-(beta-D-glucosyl)-L-seryl-[EGF-like domain protein] + UDP-alpha-D-xylose = 3-O-[alpha-D-xylosyl-(1-&gt;3)-beta-D-glucosyl]-L-seryl-[EGF-like domain protein] + UDP + H(+). Glycosyltransferase which elongates the O-linked glucose attached to EGF-like repeats in the extracellular domain of Notch proteins by catalyzing the addition of xylose. The protein is Glucoside xylosyltransferase 1 (GXYLT1) of Homo sapiens (Human).